Consider the following 293-residue polypeptide: Histamine N-methyltransferase B (293 aa).

Glutamate 28 is a substrate binding site. 5 residues coordinate S-adenosyl-L-methionine: glycine 60, glutamate 89, glutamine 94, serine 120, and isoleucine 142. Asparagine 283 provides a ligand contact to substrate.

The protein belongs to the class I-like SAM-binding methyltransferase superfamily. HNMT family. Monomer.

Its subcellular location is the cytoplasm. The catalysed reaction is histamine + S-adenosyl-L-methionine = N(tau)-methylhistamine + S-adenosyl-L-homocysteine + H(+). In terms of biological role, inactivates histamine by N-methylation. Plays an important role in degrading histamine and in regulating the airway response to histamine. This is Histamine N-methyltransferase B (hnmt-b) from Xenopus laevis (African clawed frog).